A 23-amino-acid polypeptide reads, in one-letter code: KKDGYIVDSNGCAPECFPTNXGC.

One can recognise an LCN-type CS-alpha/beta domain in the interval 2-23 (KDGYIVDSNGCAPECFPTNXGC).

Post-translationally, contains 4 disulfide bonds. As to expression, expressed by the venom gland.

The protein resides in the secreted. In terms of biological role, excitatory insect toxins induce a spastic paralysis. They bind voltage-independently at site-4 of sodium channels (Nav) and shift the voltage of activation toward more negative potentials thereby affecting sodium channel activation and promoting spontaneous and repetitive firing. Is lethal to mice. Is about 1% of the total protein in the venom. This chain is Toxin Acra2, found in Androctonus crassicauda (Arabian fat-tailed scorpion).